The following is a 576-amino-acid chain: K(+)/H(+) antiporter NhaP2 (576 aa).

Transmembrane regions (helical) follow at residues 6 to 26 (INSFFLIGALLTAVSVLLSPM), 34 to 54 (ILLIFLAVGILAGEDGPGGIL), 58 to 78 (YSTAYLVSNLALAIILLDGGM), 87 to 107 (VALWPALSLATFGVAITTSIT), 109 to 129 (MMAAWLFDLHWLQGLLVGAIV), 163 to 183 (PMAVFLTVTLIAILANVDTEM), 185 to 205 (FSFMFISFIKQFGLGICLGLG), 219 to 239 (LADGLYSILVLSGGLIIYAAS), 242 to 262 (LGGSGILSIYLVGLFLGNKPT), 271 to 291 (VLDGMTWVSQIGMFLVLGLLL), 299 to 319 (ILIPGFALAFGMILFARPVAV), 335 to 355 (WFISWVGLRGAVPIILAVFPM), and 359 to 379 (LPGAQLYFNLAFFVVLVSLLV). In terms of domain architecture, RCK C-terminal spans 405–486 (SGVEIYPSSE…LEALSNLFSQ (82 aa)).

It belongs to the monovalent cation:proton antiporter 1 (CPA1) transporter (TC 2.A.36) family. NhaP2 subfamily.

It localises to the cell inner membrane. It carries out the reaction K(+)(in) + H(+)(out) = K(+)(out) + H(+)(in). K(+)/H(+) antiporter that extrudes potassium in exchange for external protons and maintains the internal concentration of potassium under toxic levels. The chain is K(+)/H(+) antiporter NhaP2 from Shewanella baltica (strain OS155 / ATCC BAA-1091).